A 569-amino-acid polypeptide reads, in one-letter code: 4-hydroxy-7-methoxy-3-oxo-3,4-dihydro-2H-1,4-benzoxazin-2-yl glucoside beta-D-glucosidase 1b, chloroplastic (569 aa).

The transit peptide at methionine 1–alanine 50 directs the protein to the chloroplast. A beta-D-glucoside contacts are provided by residues glutamine 92, histidine 194, and asparagine 239–glutamate 240. Glutamate 240 functions as the Proton donor in the catalytic mechanism. A disulfide bridge links cysteine 259 with cysteine 265. A beta-D-glucoside contacts are provided by residues tyrosine 383, glutamate 456, tryptophan 504, glutamate 511–tryptophan 512, and phenylalanine 520. Glutamate 456 acts as the Nucleophile in catalysis.

The protein belongs to the glycosyl hydrolase 1 family. Homo- and heterohexamers. Expressed in young seedlings early after germination.

It is found in the plastid. The protein resides in the chloroplast. The enzyme catalyses Hydrolysis of terminal, non-reducing beta-D-glucosyl residues with release of beta-D-glucose.. It catalyses the reaction DIMBOA beta-D-glucoside + H2O = DIMBOA + D-glucose. It carries out the reaction DIBOA beta-D-glucoside + H2O = DIBOA + D-glucose. Acts in defense of young plant parts against pests via the production of hydroxamic acids from hydroxamic acid glucosides. Enzymatic activity is highly correlated with plant growth. The preferred substrate is DIMBOA-beta-D-glucoside. This Triticum aestivum (Wheat) protein is 4-hydroxy-7-methoxy-3-oxo-3,4-dihydro-2H-1,4-benzoxazin-2-yl glucoside beta-D-glucosidase 1b, chloroplastic (GLU1B).